We begin with the raw amino-acid sequence, 64 residues long: uncharacterized protein (64 aa).

This is an uncharacterized protein from Escherichia phage lambda (Bacteriophage lambda).